The chain runs to 181 residues: Ribonuclease HII (181 aa).

The RNase H type-2 domain occupies 1 to 181 (MICGIDEVGR…SLHRKNFKLI (181 aa)). 3 residues coordinate a divalent metal cation: D6, E7, and D98.

This sequence belongs to the RNase HII family. It depends on Mn(2+) as a cofactor. The cofactor is Mg(2+).

The protein resides in the cytoplasm. The enzyme catalyses Endonucleolytic cleavage to 5'-phosphomonoester.. Functionally, endonuclease that specifically degrades the RNA of RNA-DNA hybrids. In Borreliella burgdorferi (strain ZS7) (Borrelia burgdorferi), this protein is Ribonuclease HII.